Here is a 328-residue protein sequence, read N- to C-terminus: uncharacterized protein (328 aa).

The region spanning 37–179 (LTEKLLCHQG…AMTLLRCRKI (143 aa)) is the SIS domain. ATP is bound at residue 52–57 (GIGKSG). 2 consecutive CBS domains span residues 207 to 264 (PRTE…GGDI) and 273 to 328 (MTRN…AGLL).

This sequence belongs to the SIS family. GutQ/KpsF subfamily.

This is an uncharacterized protein from Chlamydia trachomatis serovar D (strain ATCC VR-885 / DSM 19411 / UW-3/Cx).